The sequence spans 85 residues: Small ribosomal subunit protein bS16 (85 aa).

Belongs to the bacterial ribosomal protein bS16 family.

The protein is Small ribosomal subunit protein bS16 of Clostridium kluyveri (strain NBRC 12016).